The primary structure comprises 128 residues: UPF0102 protein GSU0650 (128 aa).

It belongs to the UPF0102 family.

The sequence is that of UPF0102 protein GSU0650 from Geobacter sulfurreducens (strain ATCC 51573 / DSM 12127 / PCA).